The primary structure comprises 538 residues: MTAQNPSDQPSPTARELRLANHRLGAQNEKLTEALKASREKLAEINSRLADMAEPPSTYGTLLQLNGTGKTAEVFTSNRHMRLAVSPLLDRTDLQPGATVRLGENLQVVEVTGFADSGDVAAVVEVVGDRLIVADKLGEEAIVKAARPLQSLITNRELTTGDSVVVDRRSGWAFHMIPRAEVSSLVLEEVPDVSYENIGGLSNQIEQIRDAVELPFLHPEIYRHYGLRPPKGVLLYGPPGNGKTLIAKAVANSLSKSMGSSDKASRFADSYFLNVKGPELLNKFVGETERQIRQIFERARKIAHAGKPVIVFFDEMEAIFRTRGTGVSSDMESTVVPQLLSELDGVEGLDNVIVIGASNREELIDPAILRPGRLDVKIRVDRPDQEAALDILSKHIDASLPLAADLVAEHGGKEEAAAALCRAIAEELFRRDAAHRYVTLHLADGQTKDLYWADFVSGAMLANIVDRAKTFAIKRALSQAASTRDAAAEGGLNTADVLDAITAEINDSENLPDTTNPTEWARISGHATGRVVDITLAD.

The stretch at 14 to 54 (ARELRLANHRLGAQNEKLTEALKASREKLAEINSRLADMAE) forms a coiled coil. 240–245 (GNGKTL) provides a ligand contact to ATP.

Belongs to the AAA ATPase family. As to quaternary structure, homohexamer. Assembles into a hexameric ring structure.

The sequence is that of AAA ATPase forming ring-shaped complexes from Corynebacterium urealyticum (strain ATCC 43042 / DSM 7109).